The following is an 879-amino-acid chain: DNA mismatch repair protein MutS (879 aa).

629–636 (GPNMGGKS) provides a ligand contact to ATP.

The protein belongs to the DNA mismatch repair MutS family.

Its function is as follows. This protein is involved in the repair of mismatches in DNA. It is possible that it carries out the mismatch recognition step. This protein has a weak ATPase activity. This chain is DNA mismatch repair protein MutS, found in Erythrobacter litoralis (strain HTCC2594).